A 473-amino-acid chain; its full sequence is Glutamate--tRNA ligase (473 aa).

Positions 11-21 match the 'HIGH' region motif; sequence PSPTGFLHIGG. The 'KMSKS' region signature appears at 240–244; that stretch reads KLSKR. Position 243 (Lys243) interacts with ATP.

This sequence belongs to the class-I aminoacyl-tRNA synthetase family. Glutamate--tRNA ligase type 1 subfamily. In terms of assembly, monomer.

Its subcellular location is the cytoplasm. The catalysed reaction is tRNA(Glu) + L-glutamate + ATP = L-glutamyl-tRNA(Glu) + AMP + diphosphate. In terms of biological role, catalyzes the attachment of glutamate to tRNA(Glu) in a two-step reaction: glutamate is first activated by ATP to form Glu-AMP and then transferred to the acceptor end of tRNA(Glu). The protein is Glutamate--tRNA ligase of Afipia carboxidovorans (strain ATCC 49405 / DSM 1227 / KCTC 32145 / OM5) (Oligotropha carboxidovorans).